A 138-amino-acid polypeptide reads, in one-letter code: Superoxide dismutase [Mn] (138 aa).

Positions 2, 49, 133, and 137 each coordinate Mn(2+).

Belongs to the iron/manganese superoxide dismutase family. Mn(2+) is required as a cofactor.

It carries out the reaction 2 superoxide + 2 H(+) = H2O2 + O2. Destroys superoxide anion radicals which are normally produced within the cells and which are toxic to biological systems. This chain is Superoxide dismutase [Mn] (sodA), found in Mycolicibacterium phlei (Mycobacterium phlei).